Reading from the N-terminus, the 646-residue chain is DEAD-box ATP-dependent RNA helicase 52 (646 aa).

Disordered stretches follow at residues 1–64 (MSSN…ANSG) and 76–117 (GSGY…PAVN). The residue at position 2 (serine 2) is an N-acetylserine. Gly residues-rich tracts occupy residues 54–64 (DRGGYGGANSG) and 76–87 (GSGYGGRGGPVG). A Q motif motif is present at residues 146–174 (NTFAEIDLGEALNLNIQRCKYVKPTPVQR). One can recognise a Helicase ATP-binding domain in the interval 177–361 (IPILAAGRDL…SDFLSNYIFL (185 aa)). Position 190–197 (190–197 (AQTGSGKT)) interacts with ATP. Residues 305–308 (DEAD) carry the DEAD box motif. The region spanning 388–539 (HLMDLLHAQR…EVPDWLTRYA (152 aa)) is the Helicase C-terminal domain.

This sequence belongs to the DEAD box helicase family. DDX3/DED1 subfamily.

The catalysed reaction is ATP + H2O = ADP + phosphate + H(+). The protein is DEAD-box ATP-dependent RNA helicase 52 (RH52) of Arabidopsis thaliana (Mouse-ear cress).